The primary structure comprises 695 residues: Methionine synthase reductase (695 aa).

The Flavodoxin-like domain maps to 4–147; that stretch reads FLLLYATQRG…VVEPWINGLW (144 aa). FMN is bound by residues 10–14 and 93–124; these read TQRGQ and LLGL…QRFY. Residues 166–245 are hinge; sequence TLTMASHASR…ASLNIPSLPP (80 aa). 2 positions are modified to phosphoserine: Ser171 and Ser187. Positions 269-531 constitute an FAD-binding FR-type domain; it reads DPVFHVPVSK…PRTTNSFHLP (263 aa). Lys289 contributes to the NADP(+) binding site. FAD contacts are provided by residues 449–452 and 485–488; these read RPYS and GVCT. Residues 608–609, 622–624, and Asp657 each bind NADP(+); these read SR and YVQ. Trp695 contacts FAD.

As to quaternary structure, forms a multiprotein complex with MMACHC, MMADHC and MTR. FAD serves as cofactor. FMN is required as a cofactor.

Its subcellular location is the cytoplasm. The enzyme catalyses 2 methylcob(III)alamin-[methionine synthase] + 2 S-adenosyl-L-homocysteine + NADP(+) + H(+) = 2 cob(II)alamin-[methionine synthase] + 2 S-adenosyl-L-methionine + NADPH. It catalyses the reaction 2 cob(II)alamin + A + 2 H2O + 2 H(+) = 2 aquacob(III)alamin + AH2. In terms of biological role, key enzyme in methionine and folate homeostasis responsible for the reactivation of methionine synthase (MTR/MS) activity by catalyzing the reductive methylation of MTR-bound cob(II)alamin. Cobalamin (vitamin B12) forms a complex with MTR to serve as an intermediary in methyl transfer reactions that cycles between MTR-bound methylcob(III)alamin and MTR bound-cob(I)alamin forms, and occasional oxidative escape of the cob(I)alamin intermediate during the catalytic cycle leads to the inactive cob(II)alamin species. The processing of cobalamin in the cytosol occurs in a multiprotein complex composed of at least MMACHC, MMADHC, MTRR and MTR which may contribute to shuttle safely and efficiently cobalamin towards MTR in order to produce methionine. Also necessary for the utilization of methyl groups from the folate cycle, thereby affecting transgenerational epigenetic inheritance. Also acts as a molecular chaperone for methionine synthase by stabilizing apoMTR and incorporating methylcob(III)alamin into apoMTR to form the holoenzyme. Also serves as an aquacob(III)alamin reductase by reducing aquacob(III)alamin to cob(II)alamin; this reduction leads to stimulation of the conversion of apoMTR and aquacob(III)alamin to MTR holoenzyme. The chain is Methionine synthase reductase (MTRR) from Bos taurus (Bovine).